The chain runs to 196 residues: Small ribosomal subunit protein uS4c (196 aa).

Residues 15 to 36 are disordered; the sequence is LGTLPGLTSKRPRSGSDLKNPL. The region spanning 89–150 is the S4 RNA-binding domain; that stretch reads MRLDNILFRL…KQRSKALIQN (62 aa).

This sequence belongs to the universal ribosomal protein uS4 family. Part of the 30S ribosomal subunit. Contacts protein S5. The interaction surface between S4 and S5 is involved in control of translational fidelity.

The protein localises to the plastid. The protein resides in the chloroplast. One of the primary rRNA binding proteins, it binds directly to 16S rRNA where it nucleates assembly of the body of the 30S subunit. Functionally, with S5 and S12 plays an important role in translational accuracy. The sequence is that of Small ribosomal subunit protein uS4c (rps4) from Yucca filamentosa (Bear-grass).